The sequence spans 886 residues: Probable mixed-linked glucan synthase 8 (886 aa).

2 helical membrane-spanning segments follow: residues 87 to 107 (ILLH…VLFF) and 118 to 138 (GMFF…SWLL). Asp-213 is an active-site residue. Residues Asp-413 and Asp-415 each coordinate substrate. The active site involves Asp-577. Transmembrane regions (helical) follow at residues 659 to 679 (VFLL…IFYI), 683 to 703 (FPTY…IGMV), 723 to 743 (IIGA…KCFG), 775 to 795 (LLFP…AAIG), 812 to 832 (LGLV…LGIM), and 840 to 860 (YILF…DIAI).

The protein belongs to the glycosyltransferase 2 family. Plant cellulose synthase-like F subfamily.

The protein resides in the golgi apparatus membrane. Functionally, may catalyze both beta-1,3 and beta-1,4 glycosidic linkage on beta-D-glucan. Essential for (1,3;1,4)-beta-D-glucans synthesis in grasses and cereals (Poaceae). The mixed-linked glucans (which are not present in walls of dicotyledons or most other monocotyledonous plants) are particularly important constituents of the walls of the starchy endosperm and aleurone cells of cereal grains such as oats, wheat, rice and barley. They can account for up to 70% by weight of the wall. The sequence is that of Probable mixed-linked glucan synthase 8 (CSFL8) from Oryza sativa subsp. japonica (Rice).